The sequence spans 312 residues: Acetyl-coenzyme A carboxylase carboxyl transferase subunit alpha (312 aa).

Residues 36 to 286 enclose the CoA carboxyltransferase C-terminal domain; the sequence is RLDKEVKSIY…KEYFLDALRT (251 aa).

The protein belongs to the AccA family. As to quaternary structure, acetyl-CoA carboxylase is a heterohexamer composed of biotin carboxyl carrier protein (AccB), biotin carboxylase (AccC) and two subunits each of ACCase subunit alpha (AccA) and ACCase subunit beta (AccD).

The protein localises to the cytoplasm. It carries out the reaction N(6)-carboxybiotinyl-L-lysyl-[protein] + acetyl-CoA = N(6)-biotinyl-L-lysyl-[protein] + malonyl-CoA. It participates in lipid metabolism; malonyl-CoA biosynthesis; malonyl-CoA from acetyl-CoA: step 1/1. Its function is as follows. Component of the acetyl coenzyme A carboxylase (ACC) complex. First, biotin carboxylase catalyzes the carboxylation of biotin on its carrier protein (BCCP) and then the CO(2) group is transferred by the carboxyltransferase to acetyl-CoA to form malonyl-CoA. The chain is Acetyl-coenzyme A carboxylase carboxyl transferase subunit alpha from Helicobacter pylori (strain ATCC 700392 / 26695) (Campylobacter pylori).